Consider the following 1101-residue polypeptide: Helicase POLQ-like (1101 aa).

Residues 212–261 are disordered; sequence DLGDHSMKERDWKSSSHNTVNEELPHNCIEQPQQNDESSSKVRTSSDMNR. Positions 213–225 are enriched in basic and acidic residues; it reads LGDHSMKERDWKS. Residues 241–258 are compositionally biased toward polar residues; sequence EQPQQNDESSSKVRTSSD. One can recognise a Helicase ATP-binding domain in the interval 346–518; that stretch reads LNSVQERKNL…FLQAEYYTSQ (173 aa). 359-366 provides a ligand contact to ATP; that stretch reads LPTSGGKT. The short motif at 463 to 466 is the DEAH box element; that stretch reads DELH. Residues 566 to 758 form the Helicase C-terminal domain; sequence HLVALVTEVI…EFTKGIQTLF (193 aa).

The protein belongs to the helicase family. SKI2 subfamily. In terms of assembly, homodimer. Interacts with POLN. Interacts with RAD51B and RAD51C; promoting association with the BCDX2 complex. Interacts with the replication protein A (RPA/RP-A) complex. Interacts with RAD51; stimulating HELQ DNA helicase activity and ability to unwing DNA.

Its subcellular location is the nucleus. It localises to the chromosome. It catalyses the reaction Couples ATP hydrolysis with the unwinding of duplex DNA by translocating in the 3'-5' direction.. It carries out the reaction ATP + H2O = ADP + phosphate + H(+). With respect to regulation, ATPase activity is strongly stimulated by single-stranded DNA. Presence of ATP and Mg cofactor are required for helicase activity allowing to unwind duplex oligonucleotides up to 60-70-mer. This helicase activity is stimulated by replication protein A (RPA/RP-A) complex that binds to unwound regions and inhibits re-annealing. Functionally, single-stranded 3'-5' DNA helicase that plays a key role in homology-driven double-strand break (DSB) repair. Involved in different DSB repair mechanisms that are guided by annealing of extensive stretches of complementary bases at break ends, such as microhomology-mediated end-joining (MMEJ), single-strand annealing (SSA) or synthesis-dependent strand annealing (SDSA). Possesses both DNA unwinding and annealing activities. Forms a complex with RAD51, stimulating HELQ DNA helicase activity and ability to unwing DNA. Efficiently unwinds substrates containing 3' overhangs or a D-loop. In contrast, interaction with the replication protein A (RPA/RP-A) complex inhibits DNA unwinding by HELQ but strongly stimulates DNA strand annealing. Triggers displacement of RPA from single-stranded DNA to facilitate annealing of complementary sequences. This is Helicase POLQ-like from Homo sapiens (Human).